The following is a 373-amino-acid chain: Leucine aminopeptidase 1 (373 aa).

The first 18 residues, Met1 to Gly18, serve as a signal peptide directing secretion. Zn(2+)-binding residues include His176 and Asp195. Asn196 is a glycosylation site (N-linked (GlcNAc...) asparagine). Zn(2+) is bound by residues Glu234 and Asp261. The N-linked (GlcNAc...) asparagine glycan is linked to Asn288. An intrachain disulfide couples Cys310 to Cys314. Residue His343 participates in Zn(2+) binding. Asn348 is a glycosylation site (N-linked (GlcNAc...) asparagine).

This sequence belongs to the peptidase M28 family. M28E subfamily. As to quaternary structure, monomer. Requires Zn(2+) as cofactor.

The protein resides in the secreted. Its activity is regulated as follows. Activity is inhibited by EDTA, o-phenanthroline, bestatin and amastatin. Extracellular aminopeptidase which contributes to pathogenicity. The chain is Leucine aminopeptidase 1 (LAP1) from Trichophyton rubrum (Athlete's foot fungus).